The following is a 130-amino-acid chain: Fumarate reductase subunit C (130 aa).

The next 3 membrane-spanning stretches (helical) occupy residues 30 to 50 (EGTS…VFSL), 60 to 80 (FVSF…LFAA), and 110 to 130 (IKAL…VALL).

This sequence belongs to the FrdC family. In terms of assembly, part of an enzyme complex containing four subunits: a flavoprotein (FrdA), an iron-sulfur protein (FrdB), and two hydrophobic anchor proteins (FrdC and FrdD).

It localises to the cell inner membrane. Two distinct, membrane-bound, FAD-containing enzymes are responsible for the catalysis of fumarate and succinate interconversion; fumarate reductase is used in anaerobic growth, and succinate dehydrogenase is used in aerobic growth. Anchors the catalytic components of the fumarate reductase complex to the cell inner membrane, binds quinones. In Yersinia pestis bv. Antiqua (strain Angola), this protein is Fumarate reductase subunit C.